Consider the following 223-residue polypeptide: Keratin-associated protein 5-4 (223 aa).

14 repeat units span residues 21 to 24, 27 to 30, 79 to 82, 89 to 92, 107 to 110, 117 to 120, 135 to 138, 145 to 148, 155 to 158, 173 to 176, 183 to 186, 193 to 196, 203 to 206, and 213 to 216. A 14 X 4 AA repeats of C-C-X-P region spans residues 21–216; that stretch reads CCKPVCCCVP…CCCQSSCCAP (196 aa).

Belongs to the KRTAP type 5 family. As to quaternary structure, interacts with hair keratins. In terms of tissue distribution, expressed during the active phases of the hair cycle in the medulla and the inner root sheath of the forming hair. Also expressed in the upper layers of the epidermis of skin.

Its function is as follows. In the hair cortex, hair keratin intermediate filaments are embedded in an interfilamentous matrix, consisting of hair keratin-associated protein (KRTAP), which are essential for the formation of a rigid and resistant hair shaft through their extensive disulfide bond cross-linking with abundant cysteine residues of hair keratins. The matrix proteins include the high-sulfur and high-glycine-tyrosine keratins. The chain is Keratin-associated protein 5-4 from Mus musculus (Mouse).